The following is a 371-amino-acid chain: Dual-specificity RNA methyltransferase RlmN (371 aa).

E114 functions as the Proton acceptor in the catalytic mechanism. The Radical SAM core domain maps to 120-352; that stretch reads EEDHFTLCVS…VMTRQSKGAD (233 aa). C127 and C357 are disulfide-bonded. The [4Fe-4S] cluster site is built by C134, C138, and C141. S-adenosyl-L-methionine contacts are provided by residues 183 to 184, S216, 238 to 240, and N314; these read GE and SLN. Catalysis depends on C357, which acts as the S-methylcysteine intermediate.

This sequence belongs to the radical SAM superfamily. RlmN family. [4Fe-4S] cluster serves as cofactor.

It localises to the cytoplasm. The enzyme catalyses adenosine(2503) in 23S rRNA + 2 reduced [2Fe-2S]-[ferredoxin] + 2 S-adenosyl-L-methionine = 2-methyladenosine(2503) in 23S rRNA + 5'-deoxyadenosine + L-methionine + 2 oxidized [2Fe-2S]-[ferredoxin] + S-adenosyl-L-homocysteine. The catalysed reaction is adenosine(37) in tRNA + 2 reduced [2Fe-2S]-[ferredoxin] + 2 S-adenosyl-L-methionine = 2-methyladenosine(37) in tRNA + 5'-deoxyadenosine + L-methionine + 2 oxidized [2Fe-2S]-[ferredoxin] + S-adenosyl-L-homocysteine. In terms of biological role, specifically methylates position 2 of adenine 2503 in 23S rRNA and position 2 of adenine 37 in tRNAs. m2A2503 modification seems to play a crucial role in the proofreading step occurring at the peptidyl transferase center and thus would serve to optimize ribosomal fidelity. This Desulfosudis oleivorans (strain DSM 6200 / JCM 39069 / Hxd3) (Desulfococcus oleovorans) protein is Dual-specificity RNA methyltransferase RlmN.